A 560-amino-acid polypeptide reads, in one-letter code: Platelet glycoprotein V (560 aa).

A signal peptide spans 1-16; the sequence is MLRGTLLCAVLGLLRA. In terms of domain architecture, LRRNT spans 17–50; the sequence is QPFPCPPACKCVFRDAAQCSGGDVARISALGLPT. At 17-523 the chain is on the extracellular side; the sequence is QPFPCPPACK…KGQDHSPFWG (507 aa). N-linked (GlcNAc...) asparagine glycosylation occurs at Asn51. 13 LRR repeats span residues 75 to 96, 99 to 120, 123 to 144, 147 to 168, 171 to 193, 195 to 216, 219 to 240, 243 to 264, 267 to 288, 291 to 312, 340 to 361, 364 to 385, and 388 to 409; these read VLQR…TFSD, KLKT…LLDK, LLEQ…MFQK, NLQE…LFTN, NLKL…LGAQ, KLER…LLNS, ALTE…AFDR, NLSS…LFLH, NLTL…LFGE, GLQE…AFRN, ELQV…LLRG, KLRQ…LFRN, and SLES…VFGA. Asn181 is a glycosylation site (N-linked (GlcNAc...) (complex) asparagine). The N-linked (GlcNAc...) (complex) asparagine glycan is linked to Asn243. 3 N-linked (GlcNAc...) asparagine glycosylation sites follow: Asn267, Asn298, and Asn312. Asn385 carries N-linked (GlcNAc...) asparagine glycosylation. The 54-residue stretch at 421-474 folds into the LRRCT domain; the sequence is NSWRCDCGLGPFLGWLRQHLGLVGGEEPPRCAGPGAHAGLPLWALPGGDAECPG. The segment at 469-498 is disordered; it reads DAECPGPRGPPPRPAADSSSEAPVHPALAP. Asn499 carries an N-linked (GlcNAc...) asparagine glycan. Residues 524–544 form a helical membrane-spanning segment; that stretch reads FYFLLLAVQAMITVIIVFAMI. Residues 545 to 560 are Cytoplasmic-facing; that stretch reads KIGQLFRKLIRERALG.

Post-translationally, the N-terminus is blocked. In terms of tissue distribution, platelets and megakaryocytes.

The protein localises to the membrane. Its function is as follows. The GPIb-V-IX complex functions as the vWF receptor and mediates vWF-dependent platelet adhesion to blood vessels. The adhesion of platelets to injured vascular surfaces in the arterial circulation is a critical initiating event in hemostasis. The chain is Platelet glycoprotein V (GP5) from Homo sapiens (Human).